Consider the following 342-residue polypeptide: Thioredoxin reductase 2, mitochondrial (342 aa).

A mitochondrion-targeting transit peptide spans Met-1 to Arg-23. FAD-binding positions include Ser-34–Ala-37, Glu-56–Gln-68, Ile-63–Ala-64, Gln-68, Asn-77, Val-110, Cys-168, Asp-311, Asp-311–Ala-320, and Arg-318–Ala-320. A disulfide bridge connects residues Cys-165 and Cys-168.

This sequence belongs to the class-II pyridine nucleotide-disulfide oxidoreductase family. In terms of assembly, homodimer. FAD is required as a cofactor.

It localises to the mitochondrion. The enzyme catalyses [thioredoxin]-dithiol + NADP(+) = [thioredoxin]-disulfide + NADPH + H(+). In terms of biological role, acts on mitochondrial thioredoxin 3. Implicated in the defense against oxidative stress. This Saccharomyces cerevisiae (strain ATCC 204508 / S288c) (Baker's yeast) protein is Thioredoxin reductase 2, mitochondrial.